Consider the following 282-residue polypeptide: Small ribosomal subunit protein uS3 (282 aa).

The region spanning 43 to 111 (IRQLMSTGME…QVQLNILEVK (69 aa)) is the KH type-2 domain. Positions 218–282 (QQAASAPSRG…AAVATEGSDA (65 aa)) are disordered. Residues 230-262 (PRRDGDDRGPRRENSGPRRDGGNLRSQRNDRNE) show a composition bias toward basic and acidic residues. The segment covering 263-276 (NAAVEAAPAAAAVA) has biased composition (low complexity).

Belongs to the universal ribosomal protein uS3 family. In terms of assembly, part of the 30S ribosomal subunit. Forms a tight complex with proteins S10 and S14.

Functionally, binds the lower part of the 30S subunit head. Binds mRNA in the 70S ribosome, positioning it for translation. This chain is Small ribosomal subunit protein uS3, found in Renibacterium salmoninarum (strain ATCC 33209 / DSM 20767 / JCM 11484 / NBRC 15589 / NCIMB 2235).